Consider the following 107-residue polypeptide: Large ribosomal subunit protein bL21 (107 aa).

It belongs to the bacterial ribosomal protein bL21 family. As to quaternary structure, part of the 50S ribosomal subunit. Contacts protein L20.

Its function is as follows. This protein binds to 23S rRNA in the presence of protein L20. The protein is Large ribosomal subunit protein bL21 of Chlamydia muridarum (strain MoPn / Nigg).